Reading from the N-terminus, the 71-residue chain is AGEECDCGSPANPCCDAATCKLRPGAQCADGLCCDQCRFIKKGTVCRPARGDWNDDTCTGQSADCPRNPFH.

The 71-residue stretch at 1-71 (AGEECDCGSP…SADCPRNPFH (71 aa)) folds into the Disintegrin domain. 6 disulfides stabilise this stretch: C5/C20, C7/C15, C14/C37, C28/C34, C33/C58, and C46/C65. Residues 50-52 (RGD) carry the Cell attachment site motif.

This sequence belongs to the venom metalloproteinase (M12B) family. P-II subfamily. P-IIa sub-subfamily. As to quaternary structure, monomer. As to expression, expressed by the venom gland.

The protein resides in the secreted. Functionally, inhibits ADP- (IC(50)=56 nM) and collagen-induced (IC(50)=49 nM) aggregation of human platelets. In vitro, inhibits adhesion of endothelial cells to vitronectin, type-I collagen and, to a lower degree, fibronectin and laminin. This is Disintegrin simusmin from Crotalus simus (Central American rattlesnake).